Consider the following 514-residue polypeptide: Ras-GEF domain-containing family member 1B-A (514 aa).

The N-terminal Ras-GEF domain maps to 76-206 (HDNNLISGSL…MTQTLIRKLT (131 aa)). In terms of domain architecture, Ras-GEF spans 246-494 (DPFTLAQQLT…YLASYESEGP (249 aa)).

Detected in oocytes, and in embryos at 4 to 120 hours post-fertilization (hpf). Detected along marginal blastomeres at early epiboly stage and throughout the margin at the onset of gastrulation. At 60% epiboly, strongest expression is found in the dorsal shield region and is restricted to the epiblast. Detected in the anterior border of the presomitic mesoderm at the end of epiboly. Detected in adaxial cells, in the somites and in the nervous system during somitogenesis. Detected in diencephalon and hindbrain and in cells surrounding the notochord, including adaxial cells and ventral mesendoderm, in 15-somite stage embryos. At 48 hpf, detected mainly in the brain.

Its function is as follows. Guanine nucleotide exchange factor (GEF) for Ras family proteins (in vitro). The polypeptide is Ras-GEF domain-containing family member 1B-A (rasgef1ba) (Danio rerio (Zebrafish)).